The primary structure comprises 619 residues: UvrABC system protein C (619 aa).

The 79-residue stretch at 20-98 folds into the GIY-YIG domain; it reads TAPGVYRMYA…IKSLSPRYNV (79 aa). The UVR domain maps to 207–242; the sequence is DQLGEEIMHSMQQASEALEFERAARLRDLLSSLRSM.

Belongs to the UvrC family. As to quaternary structure, interacts with UvrB in an incision complex.

The protein resides in the cytoplasm. In terms of biological role, the UvrABC repair system catalyzes the recognition and processing of DNA lesions. UvrC both incises the 5' and 3' sides of the lesion. The N-terminal half is responsible for the 3' incision and the C-terminal half is responsible for the 5' incision. The polypeptide is UvrABC system protein C (Xanthomonas euvesicatoria pv. vesicatoria (strain 85-10) (Xanthomonas campestris pv. vesicatoria)).